A 174-amino-acid chain; its full sequence is Co-chaperone protein HscB homolog (174 aa).

Positions 2–74 (NYFELFSLLP…IQRAEHLLAL (73 aa)) constitute a J domain.

The protein belongs to the HscB family. As to quaternary structure, interacts with HscA and stimulates its ATPase activity.

Functionally, co-chaperone involved in the maturation of iron-sulfur cluster-containing proteins. Seems to help targeting proteins to be folded toward HscA. In Shewanella pealeana (strain ATCC 700345 / ANG-SQ1), this protein is Co-chaperone protein HscB homolog.